The following is a 376-amino-acid chain: NAD(P)H-quinone oxidoreductase subunit 1, chloroplastic (376 aa).

9 helical membrane passes run 27-47 (LISIFLPIVLLLVISVLGVLV), 65-85 (PEYAGSLGIMQAIVDGVKLLI), 97-117 (WLFSIGPVLVVTPVILSYLVV), 130-150 (LGIFFWIVISSITPLGLLIAG), 166-186 (AAQSISYEIPLTLCVLSISLL), 251-271 (GIKFGIFYVASYLNLLVSSLF), 272-292 (AVVLYLGGWNFPIPTTLIFFI), 310-330 (LIIPIIHISITLAKTYLFIFF), and 353-373 (FLLPMAVGNLLLTASFQLTLF).

It belongs to the complex I subunit 1 family. NDH is composed of at least 16 different subunits, 5 of which are encoded in the nucleus.

Its subcellular location is the plastid. The protein resides in the chloroplast thylakoid membrane. It carries out the reaction a plastoquinone + NADH + (n+1) H(+)(in) = a plastoquinol + NAD(+) + n H(+)(out). The enzyme catalyses a plastoquinone + NADPH + (n+1) H(+)(in) = a plastoquinol + NADP(+) + n H(+)(out). NDH shuttles electrons from NAD(P)H:plastoquinone, via FMN and iron-sulfur (Fe-S) centers, to quinones in the photosynthetic chain and possibly in a chloroplast respiratory chain. The immediate electron acceptor for the enzyme in this species is believed to be plastoquinone. Couples the redox reaction to proton translocation, and thus conserves the redox energy in a proton gradient. This is NAD(P)H-quinone oxidoreductase subunit 1, chloroplastic from Chara vulgaris (Common stonewort).